A 322-amino-acid chain; its full sequence is MDSISLRVALNDGNFIPVLGFGTTVPEKVAKDEVIKATKIAIDNGFRHFDSAYLYEVEEEVGQAIRSKIEDGTVKREDIFYTSKLWSTFHRPELVRTCLEKTLKSTQLDYVDLYIIHFPMALQPGDIFFPRDEHGKLLFETVDICDTWEAMEKCKDAGLAKSIGVSNFNCRQLERILNKPGLKYKPVCNQVECHLYLNQSKMLDYCKSKDIILVSYCTLGSSRDKTWVDQKSPVLLDDPVLCAIAKKYKQTPALVALRYQLQRGVVPLIRSFNAKRIKELTQVFEFQLASEDMKALDGLNRNFRYNNAKYFDDHPNHPFTDE.

Met1 is modified (blocked amino end (Met)). NADP(+) contacts are provided by residues 20-24 (GFGTT) and Asp50. Tyr55 serves as the catalytic Proton donor. His117 contacts substrate. Residues 166–167 (SN), Gln190, and 216–221 (YCTLGS) contribute to the NADP(+) site. Residue Trp227 participates in substrate binding. 270–280 (RSFNAKRIKEL) is an NADP(+) binding site.

The protein belongs to the aldo/keto reductase family. In terms of assembly, monomer. In terms of tissue distribution, in brain, highest levels found in olfactory bulb. Moderate levels present in cerebellum, cerebral cortex, hypothalamus and pituitary. Low levels present in amygdala, brain stem, caudate putamen, cingulate cortex, hippocampus, midbrain, and thalamus.

The protein localises to the cytoplasm. The catalysed reaction is a 3alpha-hydroxysteroid + NADP(+) = a 3-oxosteroid + NADPH + H(+). It catalyses the reaction a 3alpha-hydroxysteroid + NAD(+) = a 3-oxosteroid + NADH + H(+). Potently inhibited by the nonsteroidal anti-inflammatory drugs (NSAID). Its function is as follows. Besides being a 3-alpha-hydroxysteroid dehydrogenase, the enzyme can accomplish diverse functions: as quinone reductase, as an aromatic alcohol dehydrogenase, as dihydrodiol dehydrogenase, and as 9-, 11-, and 15-hydroxyprostaglandin dehydrogenase. In Rattus norvegicus (Rat), this protein is 3-alpha-hydroxysteroid dehydrogenase (Akr1c9).